A 515-amino-acid polypeptide reads, in one-letter code: Serine/threonine-protein kinase STE7 (515 aa).

Residues 191 to 466 (LVQLGKIGAG…IHELLHHDLI (276 aa)) form the Protein kinase domain. ATP is bound by residues 197-205 (IGAGNSGTV) and Lys220. Asp331 (proton acceptor) is an active-site residue. Ser359 is modified (phosphoserine). Position 363 is a phosphothreonine (Thr363).

This sequence belongs to the protein kinase superfamily. STE Ser/Thr protein kinase family. MAP kinase kinase subfamily.

It carries out the reaction L-seryl-[protein] + ATP = O-phospho-L-seryl-[protein] + ADP + H(+). The catalysed reaction is L-threonyl-[protein] + ATP = O-phospho-L-threonyl-[protein] + ADP + H(+). The enzyme catalyses L-tyrosyl-[protein] + ATP = O-phospho-L-tyrosyl-[protein] + ADP + H(+). Its activity is regulated as follows. Phosphorylated at multiple sites in response to pheromone. In terms of biological role, serine/threonine protein kinase required for cell-type-specific transcription and signal transduction in yeast. It is thought that it is phosphorylated by the ste11 protein kinase and that it can phosphorylate the FUS3 and or KSS1 kinases. In Saccharomyces cerevisiae (strain ATCC 204508 / S288c) (Baker's yeast), this protein is Serine/threonine-protein kinase STE7 (STE7).